The following is a 335-amino-acid chain: Ferrochelatase (335 aa).

Residues His-207 and Glu-288 each contribute to the Fe cation site.

This sequence belongs to the ferrochelatase family.

It is found in the cytoplasm. It catalyses the reaction heme b + 2 H(+) = protoporphyrin IX + Fe(2+). It participates in porphyrin-containing compound metabolism; protoheme biosynthesis; protoheme from protoporphyrin-IX: step 1/1. Functionally, catalyzes the ferrous insertion into protoporphyrin IX. The protein is Ferrochelatase of Helicobacter pylori (strain J99 / ATCC 700824) (Campylobacter pylori J99).